We begin with the raw amino-acid sequence, 330 residues long: tRNA U34 carboxymethyltransferase (330 aa).

Carboxy-S-adenosyl-L-methionine-binding positions include Lys-91, Trp-105, Lys-110, Gly-130, 152 to 154, 181 to 182, Met-196, Tyr-200, and Arg-315; these read DPS and IE.

The protein belongs to the class I-like SAM-binding methyltransferase superfamily. CmoB family. In terms of assembly, homotetramer.

It catalyses the reaction carboxy-S-adenosyl-L-methionine + 5-hydroxyuridine(34) in tRNA = 5-carboxymethoxyuridine(34) in tRNA + S-adenosyl-L-homocysteine + H(+). Catalyzes carboxymethyl transfer from carboxy-S-adenosyl-L-methionine (Cx-SAM) to 5-hydroxyuridine (ho5U) to form 5-carboxymethoxyuridine (cmo5U) at position 34 in tRNAs. This chain is tRNA U34 carboxymethyltransferase, found in Shewanella oneidensis (strain ATCC 700550 / JCM 31522 / CIP 106686 / LMG 19005 / NCIMB 14063 / MR-1).